The chain runs to 654 residues: tRNA 5-methylaminomethyl-2-thiouridine biosynthesis bifunctional protein MnmC (654 aa).

Residues 1-236 (MPTLLQHAQI…KWEVMSGAYV (236 aa)) are tRNA (mnm(5)s(2)U34)-methyltransferase. The segment at 262–654 (IGAGLAGSSS…FGLRRLIRGK (393 aa)) is FAD-dependent cmnm(5)s(2)U34 oxidoreductase.

The protein in the N-terminal section; belongs to the methyltransferase superfamily. tRNA (mnm(5)s(2)U34)-methyltransferase family. In the C-terminal section; belongs to the DAO family. Requires FAD as cofactor.

Its subcellular location is the cytoplasm. It carries out the reaction 5-aminomethyl-2-thiouridine(34) in tRNA + S-adenosyl-L-methionine = 5-methylaminomethyl-2-thiouridine(34) in tRNA + S-adenosyl-L-homocysteine + H(+). In terms of biological role, catalyzes the last two steps in the biosynthesis of 5-methylaminomethyl-2-thiouridine (mnm(5)s(2)U) at the wobble position (U34) in tRNA. Catalyzes the FAD-dependent demodification of cmnm(5)s(2)U34 to nm(5)s(2)U34, followed by the transfer of a methyl group from S-adenosyl-L-methionine to nm(5)s(2)U34, to form mnm(5)s(2)U34. This chain is tRNA 5-methylaminomethyl-2-thiouridine biosynthesis bifunctional protein MnmC, found in Pseudomonas putida (strain ATCC 700007 / DSM 6899 / JCM 31910 / BCRC 17059 / LMG 24140 / F1).